Here is a 476-residue protein sequence, read N- to C-terminus: UDP-N-acetylmuramate--L-alanine ligase (476 aa).

Residue 121 to 127 (GAHGKTT) coordinates ATP.

This sequence belongs to the MurCDEF family.

Its subcellular location is the cytoplasm. The catalysed reaction is UDP-N-acetyl-alpha-D-muramate + L-alanine + ATP = UDP-N-acetyl-alpha-D-muramoyl-L-alanine + ADP + phosphate + H(+). It functions in the pathway cell wall biogenesis; peptidoglycan biosynthesis. In terms of biological role, cell wall formation. The sequence is that of UDP-N-acetylmuramate--L-alanine ligase from Clavibacter sepedonicus (Clavibacter michiganensis subsp. sepedonicus).